Here is a 245-residue protein sequence, read N- to C-terminus: Ribonuclease PH (245 aa).

Phosphate-binding positions include Arg87 and 125 to 127 (GTR).

This sequence belongs to the RNase PH family. In terms of assembly, homohexameric ring arranged as a trimer of dimers.

It carries out the reaction tRNA(n+1) + phosphate = tRNA(n) + a ribonucleoside 5'-diphosphate. In terms of biological role, phosphorolytic 3'-5' exoribonuclease that plays an important role in tRNA 3'-end maturation. Removes nucleotide residues following the 3'-CCA terminus of tRNAs; can also add nucleotides to the ends of RNA molecules by using nucleoside diphosphates as substrates, but this may not be physiologically important. Probably plays a role in initiation of 16S rRNA degradation (leading to ribosome degradation) during starvation. This Streptomyces coelicolor (strain ATCC BAA-471 / A3(2) / M145) protein is Ribonuclease PH.